Consider the following 93-residue polypeptide: Acylphosphatase (93 aa).

The Acylphosphatase-like domain occupies 5–93; the sequence is TAILRVTGFV…EERKTFDIVY (89 aa). Residues Arg20 and Asn38 contribute to the active site.

This sequence belongs to the acylphosphatase family.

It carries out the reaction an acyl phosphate + H2O = a carboxylate + phosphate + H(+). This Listeria monocytogenes serotype 4b (strain F2365) protein is Acylphosphatase (acyP).